Here is a 373-residue protein sequence, read N- to C-terminus: Citrate synthase (373 aa).

Active-site residues include His-262 and Asp-314.

Belongs to the citrate synthase family. Homohexamer.

It carries out the reaction oxaloacetate + acetyl-CoA + H2O = citrate + CoA + H(+). It functions in the pathway carbohydrate metabolism; tricarboxylic acid cycle; isocitrate from oxaloacetate: step 1/2. The protein is Citrate synthase (ctsA) of Heyndrickxia coagulans (Weizmannia coagulans).